We begin with the raw amino-acid sequence, 368 residues long: 4-hydroxy-3-methylbut-2-en-1-yl diphosphate synthase (flavodoxin) (368 aa).

Residues cysteine 271, cysteine 274, cysteine 306, and glutamate 313 each contribute to the [4Fe-4S] cluster site.

The protein belongs to the IspG family. Requires [4Fe-4S] cluster as cofactor.

It catalyses the reaction (2E)-4-hydroxy-3-methylbut-2-enyl diphosphate + oxidized [flavodoxin] + H2O + 2 H(+) = 2-C-methyl-D-erythritol 2,4-cyclic diphosphate + reduced [flavodoxin]. It functions in the pathway isoprenoid biosynthesis; isopentenyl diphosphate biosynthesis via DXP pathway; isopentenyl diphosphate from 1-deoxy-D-xylulose 5-phosphate: step 5/6. In terms of biological role, converts 2C-methyl-D-erythritol 2,4-cyclodiphosphate (ME-2,4cPP) into 1-hydroxy-2-methyl-2-(E)-butenyl 4-diphosphate. The chain is 4-hydroxy-3-methylbut-2-en-1-yl diphosphate synthase (flavodoxin) from Haemophilus influenzae (strain 86-028NP).